Reading from the N-terminus, the 476-residue chain is Siroheme synthase (476 aa).

The tract at residues 1–203 (MHYFPVFADL…RQTEAAKKEL (203 aa)) is precorrin-2 dehydrogenase /sirohydrochlorin ferrochelatase. NAD(+)-binding positions include 22-23 (GV) and 43-44 (QK). Ser-128 bears the Phosphoserine mark. A uroporphyrinogen-III C-methyltransferase region spans residues 214–476 (GFVSLVGAGP…LDSLRIESVA (263 aa)). Position 223 (Pro-223) interacts with S-adenosyl-L-methionine. Asp-246 acts as the Proton acceptor in catalysis. Catalysis depends on Lys-268, which acts as the Proton donor. S-adenosyl-L-methionine contacts are provided by residues 299-301 (GGD), Val-304, 329-330 (TA), Met-381, and Gly-410.

It in the N-terminal section; belongs to the precorrin-2 dehydrogenase / sirohydrochlorin ferrochelatase family. In the C-terminal section; belongs to the precorrin methyltransferase family.

It carries out the reaction uroporphyrinogen III + 2 S-adenosyl-L-methionine = precorrin-2 + 2 S-adenosyl-L-homocysteine + H(+). It catalyses the reaction precorrin-2 + NAD(+) = sirohydrochlorin + NADH + 2 H(+). The enzyme catalyses siroheme + 2 H(+) = sirohydrochlorin + Fe(2+). Its pathway is cofactor biosynthesis; adenosylcobalamin biosynthesis; precorrin-2 from uroporphyrinogen III: step 1/1. The protein operates within cofactor biosynthesis; adenosylcobalamin biosynthesis; sirohydrochlorin from precorrin-2: step 1/1. It participates in porphyrin-containing compound metabolism; siroheme biosynthesis; precorrin-2 from uroporphyrinogen III: step 1/1. It functions in the pathway porphyrin-containing compound metabolism; siroheme biosynthesis; siroheme from sirohydrochlorin: step 1/1. Its pathway is porphyrin-containing compound metabolism; siroheme biosynthesis; sirohydrochlorin from precorrin-2: step 1/1. Multifunctional enzyme that catalyzes the SAM-dependent methylations of uroporphyrinogen III at position C-2 and C-7 to form precorrin-2 via precorrin-1. Then it catalyzes the NAD-dependent ring dehydrogenation of precorrin-2 to yield sirohydrochlorin. Finally, it catalyzes the ferrochelation of sirohydrochlorin to yield siroheme. The protein is Siroheme synthase of Actinobacillus succinogenes (strain ATCC 55618 / DSM 22257 / CCUG 43843 / 130Z).